The following is an 856-amino-acid chain: Protein translocase subunit SecA (856 aa).

ATP-binding positions include glutamine 77, 95–99 (GEGKT), and aspartate 534.

This sequence belongs to the SecA family. In terms of assembly, monomer and homodimer. Part of the essential Sec protein translocation apparatus which comprises SecA, SecYEG and auxiliary proteins SecDF. Other proteins may also be involved.

It localises to the cell inner membrane. The protein resides in the cytoplasm. The catalysed reaction is ATP + H2O + cellular proteinSide 1 = ADP + phosphate + cellular proteinSide 2.. In terms of biological role, part of the Sec protein translocase complex. Interacts with the SecYEG preprotein conducting channel. Has a central role in coupling the hydrolysis of ATP to the transfer of proteins into and across the cell membrane, serving as an ATP-driven molecular motor driving the stepwise translocation of polypeptide chains across the membrane. In Thermosipho africanus (strain TCF52B), this protein is Protein translocase subunit SecA.